The sequence spans 55 residues: Large ribosomal subunit protein bL33 (55 aa).

Belongs to the bacterial ribosomal protein bL33 family.

The protein is Large ribosomal subunit protein bL33 of Burkholderia ambifaria (strain MC40-6).